A 465-amino-acid chain; its full sequence is uncharacterized protein (465 aa).

Disordered regions lie at residues 1-55 (MNSS…SSHQ), 70-164 (DFSE…VEGQ), and 221-313 (TTDN…KQRV). Residues 40 to 50 (ENYKDNSDHSN) are compositionally biased toward basic and acidic residues. Polar residues predominate over residues 73–82 (ESFNDNQNLK). Residues 83–134 (NFNTTDNNFNDDYNNDYDSNNDSNNDSNNDSNNDYDNESNNYFNNDSNNDSN) are compositionally biased toward low complexity. Residues 141–150 (ETTKHKLPIE) show a composition bias toward basic and acidic residues. Over residues 221-235 (TTDNQSNTESSQENN) the composition is skewed to low complexity. 2 stretches are compositionally biased toward basic and acidic residues: residues 236–249 (VIKK…DKQP) and 259–275 (IVPK…KSIK). The span at 288–306 (IDQSNKLGKSYNTNNNNSK) shows a compositional bias: polar residues. Residues 390–423 (NKASIAELKKMRLEQRKREIEEKRRQVENKKPDS) adopt a coiled-coil conformation.

This is an uncharacterized protein from Acanthamoeba polyphaga mimivirus (APMV).